A 418-amino-acid chain; its full sequence is Imidazolonepropionase (418 aa).

Residues H79 and H81 each coordinate Fe(3+). 2 residues coordinate Zn(2+): H79 and H81. 4-imidazolone-5-propanoate contacts are provided by R88, Y151, and H184. Y151 provides a ligand contact to N-formimidoyl-L-glutamate. A Fe(3+)-binding site is contributed by H249. Residue H249 coordinates Zn(2+). Q252 is a 4-imidazolone-5-propanoate binding site. Position 324 (D324) interacts with Fe(3+). Residue D324 participates in Zn(2+) binding. Positions 326 and 328 each coordinate N-formimidoyl-L-glutamate. Residue T329 participates in 4-imidazolone-5-propanoate binding.

This sequence belongs to the metallo-dependent hydrolases superfamily. HutI family. The cofactor is Zn(2+). Fe(3+) is required as a cofactor.

It is found in the cytoplasm. It catalyses the reaction 4-imidazolone-5-propanoate + H2O = N-formimidoyl-L-glutamate. It functions in the pathway amino-acid degradation; L-histidine degradation into L-glutamate; N-formimidoyl-L-glutamate from L-histidine: step 3/3. Functionally, catalyzes the hydrolytic cleavage of the carbon-nitrogen bond in imidazolone-5-propanoate to yield N-formimidoyl-L-glutamate. It is the third step in the universal histidine degradation pathway. In Colwellia psychrerythraea (strain 34H / ATCC BAA-681) (Vibrio psychroerythus), this protein is Imidazolonepropionase.